Reading from the N-terminus, the 2435-residue chain is Highly reducing polyketide synthase ATR6 (2435 aa).

Residues 18-450 (AEPIAIVSAA…GSNAHVVLDN (433 aa)) enclose the Ketosynthase family 3 (KS3) domain. Residues Cys192, His331, and His371 each act as for beta-ketoacyl synthase activity in the active site. A malonyl-CoA:ACP transacylase (MAT) domain region spans residues 586–883 (FVFTGQGAQW…EIGPSAALGG (298 aa)). Residue Ser682 is the For malonyltransferase activity of the active site. The segment at 979 to 1125 (HDLLGGKVLG…GLVRLALNAS (147 aa)) is N-terminal hotdog fold. The interval 979–1291 (HDLLGGKVLG…LRGISMTSVG (313 aa)) is dehydratase (DH) domain. In terms of domain architecture, PKS/mFAS DH spans 979–1296 (HDLLGGKVLG…MTSVGLQGNV (318 aa)). The active-site For beta-hydroxyacyl dehydratase activity is the His1011. The tract at residues 1141-1296 (QYPTPARFWY…MTSVGLQGNV (156 aa)) is C-terminal hotdog fold. The enoylreductase (ER) domain stretch occupies residues 1724–2037 (GILDTLHFAE…DHNRLRNVVI (314 aa)). The catalytic ketoreductase (KRc) domain stretch occupies residues 2062–2301 (PEQTYLLVGK…ITGIAVPQPG (240 aa)). Residues 2353–2429 (VLLSSAVGVL…VLCQKIISRM (77 aa)) form the Carrier domain. Ser2389 is modified (O-(pantetheine 4'-phosphoryl)serine).

It functions in the pathway mycotoxin biosynthesis. Functionally, highly reducing polyketide synthase; part of the core atranone cluster (CAC) which products are predicted to catalyze most or all steps of mycotoxin atranone synthesis, starting from geranylgeranyl pyrophosphate (GGPP). The initial cyclization of GGPP to dolabellane is probably performed by the terpene cyclase ATR13. The Baeyer-Villiger oxidation near the end of the atranone synthesis, which converts atranones D and E to atranones F and G is predicted to be catalyzed by the monooxygenase ATR8. Of the CAC's other predicted gene products, the reducing PKS ATR6 might synthesize a polyketide chain. This polyketide is probably transferred onto the atranone backbone by the polyketide transferase ATR5. Other predicted CAC products include 4 oxygenases (ATR2, ATR3, ATR4, and ATR14), 3 short-chain reductases (ATR7, ATR9, and ATR10), and a methyltransferase (ATR12). These may all be involved in the various steps of atranone biosynthesis, although their specific roles must await experimental determination. The chain is Highly reducing polyketide synthase ATR6 from Stachybotrys chlorohalonatus (strain IBT 40285).